We begin with the raw amino-acid sequence, 482 residues long: MTTALQEQNTQSSATAGRVVRVIGPVVDVEFPRGGLPALYNALTVEVTLEAVAKTVTLEVAQHLGDNLVRAVSMAPTDGLVRGAAVTDTGKPISVPVGDVVKGHVFNALGDCLDQPGLGRDGEQWGIHREPPAFDQLEGKTEILETGIKVIDLLTPYVKGGKIGLFGGAGVGKTVLIQEMITRIAREFSGTSVFAGVGERTREGTDLFLEMEEMGVLQDTALVFGQMDEPPGVRMRVALSGLTMAEYFRDVQNQDVLLFIDNIFRFTQAGSEVSTLLGRMPSAVGYQPTLADEMGVLQERITSTKGKSITSLQAVYVPADDYTDPAPATTFAHLDATTELDRGIASKGIYPAVNPLTSTSRILEPSIVGERHYEVAQRVIGILQKNKELQDIIAILGMDELSEEDKITVQRARRIERFLGQNFFVAEKFTGLPGSYVPLADTIDAFERICNGEFDHYPEQAFNGLGGLDDVEAAYKKLTEKK.

Position 167–174 (167–174 (GGAGVGKT)) interacts with ATP.

The protein belongs to the ATPase alpha/beta chains family. As to quaternary structure, F-type ATPases have 2 components, CF(1) - the catalytic core - and CF(0) - the membrane proton channel. CF(1) has five subunits: alpha(3), beta(3), gamma(1), delta(1), epsilon(1). CF(0) has three main subunits: a(1), b(2) and c(9-12). The alpha and beta chains form an alternating ring which encloses part of the gamma chain. CF(1) is attached to CF(0) by a central stalk formed by the gamma and epsilon chains, while a peripheral stalk is formed by the delta and b chains.

It is found in the cell membrane. The enzyme catalyses ATP + H2O + 4 H(+)(in) = ADP + phosphate + 5 H(+)(out). In terms of biological role, produces ATP from ADP in the presence of a proton gradient across the membrane. The catalytic sites are hosted primarily by the beta subunits. In Corynebacterium aurimucosum (strain ATCC 700975 / DSM 44827 / CIP 107346 / CN-1) (Corynebacterium nigricans), this protein is ATP synthase subunit beta.